A 308-amino-acid polypeptide reads, in one-letter code: MGIKALAGRDLLAIADLTIEEMKSLLQLAADLKSGVLKPHCRKILGLLFYKASTRTRVSFTAAMYQLGGQVLDLNPSVTQVGRGEPIQDTARVLDRYIDILAVRTFKQTDLQTFADHAKMPIINALSDLEHPCQILADLQTIKECFGKLEGLTVTYLGDGNNVAHSLILGGVMMGMTVRVATPKNYEPLAEIVQQAQQIAAPGGKVELTDDPKAAAQGSHILYTDVWASMGQEDLADSRIPIFQPYQINQELLALADPEAIVLHCLPAHRGEEITDAVMEGPQSRLWDQAENRMHAQKALMVALLGLV.

Residues 53-56 (STRT), Gln80, Arg104, and 131-134 (HPCQ) contribute to the carbamoyl phosphate site. L-ornithine contacts are provided by residues Asn162, Asp225, and 229 to 230 (SM). Carbamoyl phosphate contacts are provided by residues 265–266 (CL) and Arg293.

The protein belongs to the aspartate/ornithine carbamoyltransferase superfamily. OTCase family.

It localises to the cytoplasm. The catalysed reaction is carbamoyl phosphate + L-ornithine = L-citrulline + phosphate + H(+). Its pathway is amino-acid biosynthesis; L-arginine biosynthesis; L-arginine from L-ornithine and carbamoyl phosphate: step 1/3. Reversibly catalyzes the transfer of the carbamoyl group from carbamoyl phosphate (CP) to the N(epsilon) atom of ornithine (ORN) to produce L-citrulline. This chain is Ornithine carbamoyltransferase (argF), found in Synechocystis sp. (strain ATCC 27184 / PCC 6803 / Kazusa).